A 609-amino-acid polypeptide reads, in one-letter code: Pentatricopeptide repeat-containing protein At5g13770, chloroplastic (609 aa).

A chloroplast-targeting transit peptide spans 1 to 44; it reads MAIASGSWVATVNHHANPHSFTSPTKPIFFLSQKPHNFHVCSSR. PPR repeat units lie at residues 103–137, 138–168, 172–207, 208–242, 247–281, 282–316, 317–351, 352–386, 387–421, 422–456, 457–491, 492–526, and 527–561; these read ELRTTKHLISYLVSSKSWDLLVSVCEDLREHKALP, DGQTCSNLIRSCIRDRKFRITHCLLSVFRSD, AVSASDAAMKGFNKLQMYSSTIQVFDRLKQSVGVEP, SPGCYCRIMEAHEKIGENHKVVELFQEFKSQRLSF, SGSIYTIVCSSLAKSGRAFEALEVLEEMKDKGIPE, SSELYSMLIRAFAEAREVVITEKLFKEAGGKKLLK, DPEMCLKVVLMYVREGNMETTLEVVAAMRKAELKV, TDCILCAIVNGFSKQRGFAEAVKVYEWAMKEECEA, GQVTYAIAINAYCRLEKYNKAEMLFDEMVKKGFDK, CVVAYSNIMDMYGKTRRLSDAVRLMAKMKQRGCKP, NIWIYNSLIDMHGRAMDLRRAEKIWKEMKRAKVLP, DKVSYTSMISAYNRSKELERCVELYQEFRMNRGKI, and DRAMAGIMVGVFSKTSRIDELMRLLQDMKVEGTRL.

It belongs to the PPR family. P subfamily.

The protein resides in the plastid. It localises to the chloroplast. In Arabidopsis thaliana (Mouse-ear cress), this protein is Pentatricopeptide repeat-containing protein At5g13770, chloroplastic.